The primary structure comprises 68 residues: Conotoxin Lt5.11 (68 aa).

The first 19 residues, 1-19 (MLCLPVFIILLLLASPAAP), serve as a signal peptide directing secretion. Residues 20–54 (KSLETRIQNDLIRAGLTDADLKTEKGFLSGLLNVA) constitute a propeptide that is removed on maturation.

Belongs to the conotoxin T superfamily. In terms of processing, contains 2 disulfide bonds that can be either 'C1-C3, C2-C4' or 'C1-C4, C2-C3', since these disulfide connectivities have been observed for conotoxins with cysteine framework V (for examples, see AC P0DQQ7 and AC P81755). Expressed by the venom duct.

Its subcellular location is the secreted. In Conus litteratus (Lettered cone), this protein is Conotoxin Lt5.11.